A 259-amino-acid chain; its full sequence is Ribosomal RNA small subunit methyltransferase J (259 aa).

Residues 109 to 110 (RD), 125 to 126 (ER), 161 to 162 (SS), and D179 each bind S-adenosyl-L-methionine.

It belongs to the methyltransferase superfamily. RsmJ family.

The protein localises to the cytoplasm. The enzyme catalyses guanosine(1516) in 16S rRNA + S-adenosyl-L-methionine = N(2)-methylguanosine(1516) in 16S rRNA + S-adenosyl-L-homocysteine + H(+). Functionally, specifically methylates the guanosine in position 1516 of 16S rRNA. In Shewanella putrefaciens (strain CN-32 / ATCC BAA-453), this protein is Ribosomal RNA small subunit methyltransferase J.